The sequence spans 403 residues: S-arrestin (403 aa).

At T231 the chain carries Phosphothreonine. The segment at 381–403 (RQNLKDTGENTEGKKDEDAGQDE) is disordered.

Belongs to the arrestin family. Monomer. Homodimer. Homotetramer. Interacts with RHO (via the phosphorylated C-terminus). In terms of tissue distribution, retina and pineal gland.

Its subcellular location is the cell projection. It is found in the cilium. The protein localises to the photoreceptor outer segment. The protein resides in the membrane. Binds to photoactivated, phosphorylated RHO and terminates RHO signaling via G-proteins by competing with G-proteins for the same binding site on RHO. May play a role in preventing light-dependent degeneration of retinal photoreceptor cells. The chain is S-arrestin (Sag) from Rattus norvegicus (Rat).